The following is a 498-amino-acid chain: Putative BTB/POZ domain-containing protein L788 (498 aa).

The 72-residue stretch at 28-99 folds into the BTB domain; it reads TDIILVLEDD…FYGQKIKSGN (72 aa).

Belongs to the mimivirus BTB/WD family.

This chain is Putative BTB/POZ domain-containing protein L788, found in Acanthamoeba polyphaga (Amoeba).